Reading from the N-terminus, the 452-residue chain is UPF0210 protein Dred_1672 (452 aa).

It belongs to the UPF0210 family. In terms of assembly, homodimer.

In Desulforamulus reducens (strain ATCC BAA-1160 / DSM 100696 / MI-1) (Desulfotomaculum reducens), this protein is UPF0210 protein Dred_1672.